Here is a 441-residue protein sequence, read N- to C-terminus: Putative cytochrome P450 138 (441 aa).

Cys388 provides a ligand contact to heme.

This sequence belongs to the cytochrome P450 family. The cofactor is heme.

The sequence is that of Putative cytochrome P450 138 (cyp138) from Mycobacterium bovis (strain ATCC BAA-935 / AF2122/97).